We begin with the raw amino-acid sequence, 92 residues long: DNA-binding protein HU-alpha (92 aa).

Belongs to the bacterial histone-like protein family. Heterodimer of an alpha and a beta chain.

Functionally, histone-like DNA-binding protein which is capable of wrapping DNA to stabilize it, and thus to prevent its denaturation under extreme environmental conditions. The protein is DNA-binding protein HU-alpha (hupA) of Burkholderia pseudomallei (strain K96243).